The chain runs to 242 residues: MSKSRLTVFSFVRRFLLRLMVVLAVFWGGGIALFSVAPVPFSAVMVERQVSAWLHGNFRYVAHSDWVSMDQISPWMGLAVIAAEDQKFPEHWGFDVASIEKALAHNERNENRIRGASTISQQTAKNLFLWDGRSWVRKGLEAGLTLGIETVWSKKRILTVYLNIAEFGDGVFGVEAAAQRYFHKPASKLTRSEAALLAAVLPNPLRFKVSSPSGYVRSRQAWILRQMYQLGGEPFMQQHQLD.

Residues 19-39 traverse the membrane as a helical segment; that stretch reads LMVVLAVFWGGGIALFSVAPV.

This sequence belongs to the glycosyltransferase 51 family.

It is found in the cell inner membrane. The enzyme catalyses [GlcNAc-(1-&gt;4)-Mur2Ac(oyl-L-Ala-gamma-D-Glu-L-Lys-D-Ala-D-Ala)](n)-di-trans,octa-cis-undecaprenyl diphosphate + beta-D-GlcNAc-(1-&gt;4)-Mur2Ac(oyl-L-Ala-gamma-D-Glu-L-Lys-D-Ala-D-Ala)-di-trans,octa-cis-undecaprenyl diphosphate = [GlcNAc-(1-&gt;4)-Mur2Ac(oyl-L-Ala-gamma-D-Glu-L-Lys-D-Ala-D-Ala)](n+1)-di-trans,octa-cis-undecaprenyl diphosphate + di-trans,octa-cis-undecaprenyl diphosphate + H(+). It functions in the pathway cell wall biogenesis; peptidoglycan biosynthesis. In terms of biological role, peptidoglycan polymerase that catalyzes glycan chain elongation from lipid-linked precursors. This Escherichia coli O139:H28 (strain E24377A / ETEC) protein is Biosynthetic peptidoglycan transglycosylase.